Consider the following 114-residue polypeptide: Lymphotactin (114 aa).

The N-terminal stretch at 1–21 (MRLLLLTFLGVCCLTPWVVEG) is a signal peptide. The cysteines at positions 32 and 69 are disulfide-linked. Positions 92–114 (KNMAETVPTGAQRSTSTAITLTG) are disordered. Positions 100-114 (TGAQRSTSTAITLTG) are enriched in polar residues.

The protein belongs to the intercrine gamma family. In terms of tissue distribution, expressed in activated CD8(+) T cells. In the thymus, expressed by medullary thymic epithelial cells.

The protein localises to the secreted. Functionally, chemotactic activity for lymphocytes but not for monocytes or neutrophils. In thymus, mediates medullary accumulation of thymic dendritic cells and contributes to regulatoy T cell development, playing a role in self-tolerance establishment. The chain is Lymphotactin (Xcl1) from Mus musculus (Mouse).